The primary structure comprises 418 residues: UPF0754 membrane protein alr5253 (418 aa).

2 helical membrane-spanning segments follow: residues 10-30 and 394-414; these read WSHLWLYVSPPILGGIIGYFT and IVSLGGILGLIVGLFQTAFFI.

It belongs to the UPF0754 family.

The protein localises to the cell inner membrane. This Nostoc sp. (strain PCC 7120 / SAG 25.82 / UTEX 2576) protein is UPF0754 membrane protein alr5253.